We begin with the raw amino-acid sequence, 210 residues long: 2-hydroxy-3-keto-5-methylthiopentenyl-1-phosphate phosphatase (210 aa).

The protein belongs to the HAD-like hydrolase superfamily. MtnX family.

The catalysed reaction is 2-hydroxy-5-methylsulfanyl-3-oxopent-1-enyl phosphate + H2O = 1,2-dihydroxy-5-(methylsulfanyl)pent-1-en-3-one + phosphate. It participates in amino-acid biosynthesis; L-methionine biosynthesis via salvage pathway; L-methionine from S-methyl-5-thio-alpha-D-ribose 1-phosphate: step 4/6. Functionally, dephosphorylates 2-hydroxy-3-keto-5-methylthiopentenyl-1-phosphate (HK-MTPenyl-1-P) yielding 1,2-dihydroxy-3-keto-5-methylthiopentene (DHK-MTPene). This is 2-hydroxy-3-keto-5-methylthiopentenyl-1-phosphate phosphatase from Microcystis aeruginosa.